A 216-amino-acid chain; its full sequence is Octanoyltransferase (216 aa).

Positions 24–212 constitute a BPL/LPL catalytic domain; it reads KFRKECILFL…NLCSFLEPIN (189 aa). Residues 69 to 76, 140 to 142, and 153 to 155 each bind substrate; these read RGGDFTAH, SIG, and GIA. The active-site Acyl-thioester intermediate is the Cys171.

This sequence belongs to the LipB family.

Its subcellular location is the cytoplasm. It catalyses the reaction octanoyl-[ACP] + L-lysyl-[protein] = N(6)-octanoyl-L-lysyl-[protein] + holo-[ACP] + H(+). Its pathway is protein modification; protein lipoylation via endogenous pathway; protein N(6)-(lipoyl)lysine from octanoyl-[acyl-carrier-protein]: step 1/2. Its function is as follows. Catalyzes the transfer of endogenously produced octanoic acid from octanoyl-acyl-carrier-protein onto the lipoyl domains of lipoate-dependent enzymes. Lipoyl-ACP can also act as a substrate although octanoyl-ACP is likely to be the physiological substrate. The chain is Octanoyltransferase from Leptospira interrogans serogroup Icterohaemorrhagiae serovar copenhageni (strain Fiocruz L1-130).